Consider the following 565-residue polypeptide: Sulfite reductase [NADPH] hemoprotein beta-component (565 aa).

The [4Fe-4S] cluster site is built by cysteine 429, cysteine 435, cysteine 474, and cysteine 478. Residue cysteine 478 participates in siroheme binding.

Belongs to the nitrite and sulfite reductase 4Fe-4S domain family. Alpha(8)-beta(8). The alpha component is a flavoprotein, the beta component is a hemoprotein. Siroheme is required as a cofactor. [4Fe-4S] cluster serves as cofactor.

The catalysed reaction is hydrogen sulfide + 3 NADP(+) + 3 H2O = sulfite + 3 NADPH + 4 H(+). Its pathway is sulfur metabolism; hydrogen sulfide biosynthesis; hydrogen sulfide from sulfite (NADPH route): step 1/1. Component of the sulfite reductase complex that catalyzes the 6-electron reduction of sulfite to sulfide. This is one of several activities required for the biosynthesis of L-cysteine from sulfate. The protein is Sulfite reductase [NADPH] hemoprotein beta-component of Pseudoalteromonas translucida (strain TAC 125).